The primary structure comprises 670 residues: DNA ligase (670 aa).

NAD(+) is bound by residues 33–37 (DVEYD), 82–83 (SL), and E114. The active-site N6-AMP-lysine intermediate is K116. NAD(+) contacts are provided by R137, E174, K291, and K315. Zn(2+) is bound by residues C409, C412, C427, and C433. The region spanning 593-670 (DQELPLEGKV…TEEDLIALIS (78 aa)) is the BRCT domain.

This sequence belongs to the NAD-dependent DNA ligase family. LigA subfamily. The cofactor is Mg(2+). Mn(2+) is required as a cofactor.

The catalysed reaction is NAD(+) + (deoxyribonucleotide)n-3'-hydroxyl + 5'-phospho-(deoxyribonucleotide)m = (deoxyribonucleotide)n+m + AMP + beta-nicotinamide D-nucleotide.. Its function is as follows. DNA ligase that catalyzes the formation of phosphodiester linkages between 5'-phosphoryl and 3'-hydroxyl groups in double-stranded DNA using NAD as a coenzyme and as the energy source for the reaction. It is essential for DNA replication and repair of damaged DNA. The sequence is that of DNA ligase from Vibrio atlanticus (strain LGP32) (Vibrio splendidus (strain Mel32)).